A 1531-amino-acid polypeptide reads, in one-letter code: MEVSPLQPVNENMQVNKIKKNEDAKKRLSVERIYQKKTQLEHILLRPDTYIGSVELVTQQMWVYDEDVGINYREVTFVPGLYKIFDEILVNAADNKQRDPKMSCIRVTIDPENNLISIWNNGKGIPVVEHKVEKMYVPALIFGQLLTSSNYDDDEKKVTGGRNGYGAKLCNIFSTKFTVETASREYKKMFKQTWMDNMGRAGEMELKPFNGEDYTCITFQPDLSKFKMQSLDKDIVALMVRRAYDIAGSTKDVKVFLNGNKLPVKGFRSYVDMYLKDKLDETGNSLKVIHEQVNHRWEVCLTMSEKGFQQISFVNSIATSKGGRHVDYVADQIVTKLVDVVKKKNKGGVAVKAHQVKNHMWIFVNALIENPTFDSQTKENMTLQPKSFGSTCQLSEKFIKAAIGCGIVESILNWVKFKAQVQLNKKCSAVKHNRIKGIPKLDDANDAGGRNSTECTLILTEGDSAKTLAVSGLGVVGRDKYGVFPLRGKILNVREASHKQIMENAEINNIIKIVGLQYKKNYEDEDSLKTLRYGKIMIMTDQDQDGSHIKGLLINFIHHNWPSLLRHRFLEEFITPIVKVSKNKQEMAFYSLPEFEEWKSSTPNHKKWKVKYYKGLGTSTSKEAKEYFADMKRHRIQFKYSGPEDDAAISLAFSKKQIDDRKEWLTNFMEDRRQRKLLGLPEDYLYGQTTTYLTYNDFINKELILFSNSDNERSIPSMVDGLKPGQRKVLFTCFKRNDKREVKVAQLAGSVAEMSSYHHGEMSLMMTIINLAQNFVGSNNLNLLQPIGQFGTRLHGGKDSASPRYIFTMLSSLARLLFPPKDDHTLKFLYDDNQRVEPEWYIPIIPMVLINGAEGIGTGWSCKIPNFDVREIVNNIRRLMDGEEPLPMLPSYKNFKGTIEELAPNQYVISGEVAILNSTTIEISELPVRTWTQTYKEQVLEPMLNGTEKTPPLITDYREYHTDTTVKFVVKMTEEKLAEAERVGLHKVFKLQTSLTCNSMVLFDHVGCLKKYDTVLDILRDFFELRLKYYGLRKEWLLGMLGAESAKLNNQARFILEKIDGKIIIENKPKKELIKVLIQRGYDSDPVKAWKEAQQKVPDEEENEESDNEKETEKSDSVTDSGPTFNYLLDMPLWYLTKEKKDELCRLRNEKEQELDTLKRKSPSDLWKEDLATFIEELEAVEAKEKQDEQVGLPGKGGKAKGKKTQMAEVLPSPRGQRVIPRITIEMKAEAEKKNKKKIKNENTEGSPQEDGVELEGLKQRLEKKQKREPGTKTKKQTTLAFKPIKKGKKRNPWSDSESDRSSDESNFDVPPRETEPRRAATKTKFTMDLDSDEDFSDFDEKTDDEDFVPSDASPPKTKTSPKLSNKELKPQKSVVSDLEADDVKGSVPLSSSPPATHFPDETEITNPVPKKNVTVKKTAAKSQSSTSTTGAKKRAAPKGTKRDPALNSGVSQKPDPAKTKNRRKRKPSTSDDSDSNFEKIVSKAVTSKKSKGESDDFHMDFDSAVAPRAKSVRAKKPIKYLEESDEDDLF.

An N-acetylmethionine modification is found at M1. Phosphoserine is present on S4. Residue K17 forms a Glycyl lysine isopeptide (Lys-Gly) (interchain with G-Cter in SUMO2) linkage. ATP is bound by residues N91, N120, and 148-150 (SSN). Glycyl lysine isopeptide (Lys-Gly) (interchain with G-Cter in SUMO2) cross-links involve residues K156 and K157. 161–168 (GRNGYGAK) contacts ATP. K261 participates in a covalent cross-link: Glycyl lysine isopeptide (Lys-Gly) (interchain with G-Cter in SUMO2). Residue T282 is modified to Phosphothreonine. The segment at 342–344 (KKK) is interaction with DNA. Residue K352 forms a Glycyl lysine isopeptide (Lys-Gly) (interchain with G-Cter in SUMO2) linkage. 376-378 (QTK) contacts ATP. Residues K386, K397, K416, K418, K425, and K440 each participate in a glycyl lysine isopeptide (Lys-Gly) (interchain with G-Cter in SUMO2) cross-link. The Toprim domain maps to 455 to 572 (CTLILTEGDS…SLLRHRFLEE (118 aa)). Mg(2+) is bound at residue E461. Glycyl lysine isopeptide (Lys-Gly) (interchain with G-Cter in SUMO2) cross-links involve residues K466, K480, and K529. Residues D541 and D543 each coordinate Mg(2+). Glycyl lysine isopeptide (Lys-Gly) (interchain with G-Cter in SUMO2) cross-links involve residues K584, K599, K614, K622, K625, K632, K639, K655, K662, and K676. The Topo IIA-type catalytic domain maps to 715–1171 (IPSMVDGLKP…SPSDLWKEDL (457 aa)). Y805 acts as the O-(5'-phospho-DNA)-tyrosine intermediate in catalysis. Residues 990 to 999 (KLQTSLTCNS) are interaction with DNA. The Nuclear export signal motif lies at 1018 to 1028 (ILRDFFELRLK). A Glycyl lysine isopeptide (Lys-Gly) (interchain with G-Cter in SUMO2) cross-link involves residue K1075. 2 disordered regions span residues 1090 to 1123 (WKEA…DSGP) and 1184 to 1531 (KEKQ…DDLF). Residues 1099–1108 (DEEENEESDN) are compositionally biased toward acidic residues. At S1106 the chain carries Phosphoserine; by CK1. Residues K1114, K1196, and K1204 each participate in a glycyl lysine isopeptide (Lys-Gly) (interchain with G-Cter in SUMO2) cross-link. Position 1205 is a phosphothreonine (T1205). At S1213 the chain carries Phosphoserine. A Glycyl lysine isopeptide (Lys-Gly) (interchain with G-Cter in SUMO2) cross-link involves residue K1228. K1240 participates in a covalent cross-link: Glycyl lysine isopeptide (Lys-Gly) (interchain with G-Cter in SUMO1); alternate. A Glycyl lysine isopeptide (Lys-Gly) (interchain with G-Cter in SUMO2); alternate cross-link involves residue K1240. A Phosphothreonine modification is found at T1244. S1247 carries the post-translational modification Phosphoserine. Residues 1256-1272 (EGLKQRLEKKQKREPGT) show a composition bias toward basic and acidic residues. Residues K1259, K1276, K1283, and K1286 each participate in a glycyl lysine isopeptide (Lys-Gly) (interchain with G-Cter in SUMO2) cross-link. A phosphoserine mark is found at S1295, S1297, S1299, and S1302. T1327 is subject to Phosphothreonine. Positions 1330 to 1349 (LDSDEDFSDFDEKTDDEDFV) are enriched in acidic residues. A phosphoserine mark is found at S1332 and S1337. Residue T1343 is modified to Phosphothreonine; by PLK3. A phosphoserine mark is found at S1351 and S1354. Residues K1363, K1367, and K1373 each participate in a glycyl lysine isopeptide (Lys-Gly) (interchain with G-Cter in SUMO2) cross-link. Phosphoserine is present on residues S1374 and S1377. A Glycyl lysine isopeptide (Lys-Gly) (interchain with G-Cter in SUMO2) cross-link involves residue K1385. S1387, S1391, S1392, and S1393 each carry phosphoserine. Residues 1406 to 1431 (TNPVPKKNVTVKKTAAKSQSSTSTTG) show a composition bias toward low complexity. A Glycyl lysine isopeptide (Lys-Gly) (interchain with G-Cter in SUMO2); alternate cross-link involves residue K1422. The residue at position 1422 (K1422) is an N6-acetyllysine; alternate. Residues 1433–1439 (KKRAAPK) are interaction with PLSCR1. A Glycyl lysine isopeptide (Lys-Gly) (interchain with G-Cter in SUMO2); alternate cross-link involves residue K1442. K1442 is subject to N6-acetyllysine; alternate. S1449 carries the phosphoserine modification. Residues K1454 and K1459 each participate in a glycyl lysine isopeptide (Lys-Gly) (interchain with G-Cter in SUMO2) cross-link. Phosphoserine; by CK2 is present on S1469. Position 1470 is a phosphothreonine (T1470). S1471, S1474, and S1476 each carry phosphoserine. Glycyl lysine isopeptide (Lys-Gly) (interchain with G-Cter in SUMO2) cross-links involve residues K1484 and K1492. The span at 1491 to 1502 (SKGESDDFHMDF) shows a compositional bias: basic and acidic residues. A phosphoserine mark is found at S1495, S1504, and S1525.

The protein belongs to the type II topoisomerase family. Homodimer. Interacts with COPS5. Interacts with RECQL5; this stimulates DNA decatenation. Interacts with SETMAR; stimulates the topoisomerase activity. Interacts with DHX9; this interaction occurs in a E2 enzyme UBE2I- and RNA-dependent manner, negatively regulates DHX9-mediated double-stranded DNA and RNA duplex helicase activity and stimulates TOP2A-mediated supercoiled DNA relaxation activity. Interacts with HNRNPU (via C-terminus); this interaction protects the topoisomerase TOP2A from degradation and positively regulates the relaxation of supercoiled DNA in a RNA-dependent manner. Interacts with MCM3AP isoform GANP. Interacts with ERCC6. Interacts with PLSCR1. Interacts with GCNA; this interaction allows the resolution of topoisomerase II (TOP2A) DNA-protein cross-links. Interacts with POL1RA/RPA1 (via dock II) and UBTF in the context of Pol I complex; may assist Pol I transcription initiation by releasing supercoils occurring during DNA unwinding. Interacts with TPRN; TPRN interacts with a number of DNA damage response proteins, is recruited to sites of DNA damage and may play a role in DNA damage repair. The cofactor is Mg(2+). Mn(2+) is required as a cofactor. Ca(2+) serves as cofactor. In terms of processing, phosphorylation has no effect on catalytic activity. However, phosphorylation at Ser-1106 by CSNK1D/CK1 promotes DNA cleavable complex formation. Post-translationally, (Microbial infection) Deubiquitinated by Epstein-Barr virus BPLF1; leading to stabilized SUMOylated TOP2A trapped in cleavage complexes, which halts the DNA damage response to TOP2A-induced double-strand DNA breaks. SUMOylated. In terms of tissue distribution, expressed in the tonsil, spleen, lymph node, thymus, skin, pancreas, testis, colon, kidney, liver, brain and lung. Also found in high-grade lymphomas, squamous cell lung tumors and seminomas.

The protein localises to the cytoplasm. It is found in the nucleus. Its subcellular location is the nucleoplasm. It localises to the nucleolus. The catalysed reaction is ATP-dependent breakage, passage and rejoining of double-stranded DNA.. Specifically inhibited by the intercalating agent amsacrine. In terms of biological role, key decatenating enzyme that alters DNA topology by binding to two double-stranded DNA molecules, generating a double-stranded break in one of the strands, passing the intact strand through the broken strand, and religating the broken strand. May play a role in regulating the period length of BMAL1 transcriptional oscillation. This chain is DNA topoisomerase 2-alpha (TOP2A), found in Homo sapiens (Human).